We begin with the raw amino-acid sequence, 261 residues long: 5'-nucleotidase SurE (261 aa).

A divalent metal cation-binding residues include D8, D9, S39, and N91.

The protein belongs to the SurE nucleotidase family. A divalent metal cation is required as a cofactor.

It localises to the cytoplasm. The enzyme catalyses a ribonucleoside 5'-phosphate + H2O = a ribonucleoside + phosphate. Its function is as follows. Nucleotidase that shows phosphatase activity on nucleoside 5'-monophosphates. This chain is 5'-nucleotidase SurE, found in Polaromonas sp. (strain JS666 / ATCC BAA-500).